The following is a 111-amino-acid chain: Large ribosomal subunit protein bL21 (111 aa).

This sequence belongs to the bacterial ribosomal protein bL21 family. As to quaternary structure, part of the 50S ribosomal subunit. Contacts protein L20.

Its function is as follows. This protein binds to 23S rRNA in the presence of protein L20. In Thermosynechococcus vestitus (strain NIES-2133 / IAM M-273 / BP-1), this protein is Large ribosomal subunit protein bL21.